Reading from the N-terminus, the 110-residue chain is UPF0122 protein SERP0802 (110 aa).

It belongs to the UPF0122 family.

Functionally, might take part in the signal recognition particle (SRP) pathway. This is inferred from the conservation of its genetic proximity to ftsY/ffh. May be a regulatory protein. This Staphylococcus epidermidis (strain ATCC 35984 / DSM 28319 / BCRC 17069 / CCUG 31568 / BM 3577 / RP62A) protein is UPF0122 protein SERP0802.